The chain runs to 246 residues: 1-(5-phosphoribosyl)-5-[(5-phosphoribosylamino)methylideneamino] imidazole-4-carboxamide isomerase (246 aa).

Catalysis depends on Asp-7, which acts as the Proton acceptor. Residue Asp-129 is the Proton donor of the active site.

It belongs to the HisA/HisF family.

It is found in the cytoplasm. The catalysed reaction is 1-(5-phospho-beta-D-ribosyl)-5-[(5-phospho-beta-D-ribosylamino)methylideneamino]imidazole-4-carboxamide = 5-[(5-phospho-1-deoxy-D-ribulos-1-ylimino)methylamino]-1-(5-phospho-beta-D-ribosyl)imidazole-4-carboxamide. The protein operates within amino-acid biosynthesis; L-histidine biosynthesis; L-histidine from 5-phospho-alpha-D-ribose 1-diphosphate: step 4/9. The sequence is that of 1-(5-phosphoribosyl)-5-[(5-phosphoribosylamino)methylideneamino] imidazole-4-carboxamide isomerase from Buchnera aphidicola subsp. Acyrthosiphon pisum (strain Tuc7).